Consider the following 404-residue polypeptide: Cysteine desulfurase IscS (404 aa).

Residues 75–76, Asn-155, Gln-183, and 203–205 each bind pyridoxal 5'-phosphate; these read AT and SGH. At Lys-206 the chain carries N6-(pyridoxal phosphate)lysine. Position 243 (Thr-243) interacts with pyridoxal 5'-phosphate. Cys-328 acts as the Cysteine persulfide intermediate in catalysis. A [2Fe-2S] cluster-binding site is contributed by Cys-328.

This sequence belongs to the class-V pyridoxal-phosphate-dependent aminotransferase family. NifS/IscS subfamily. In terms of assembly, homodimer. Forms a heterotetramer with IscU, interacts with other sulfur acceptors. Pyridoxal 5'-phosphate is required as a cofactor.

The protein resides in the cytoplasm. It carries out the reaction (sulfur carrier)-H + L-cysteine = (sulfur carrier)-SH + L-alanine. It functions in the pathway cofactor biosynthesis; iron-sulfur cluster biosynthesis. In terms of biological role, master enzyme that delivers sulfur to a number of partners involved in Fe-S cluster assembly, tRNA modification or cofactor biosynthesis. Catalyzes the removal of elemental sulfur atoms from cysteine to produce alanine. Functions as a sulfur delivery protein for Fe-S cluster synthesis onto IscU, an Fe-S scaffold assembly protein, as well as other S acceptor proteins. This Pectobacterium atrosepticum (strain SCRI 1043 / ATCC BAA-672) (Erwinia carotovora subsp. atroseptica) protein is Cysteine desulfurase IscS.